We begin with the raw amino-acid sequence, 118 residues long: Small ribosomal subunit protein uS13 (118 aa).

The disordered stretch occupies residues 91-118 (HRRSLPLRGQRTKNNARTRKGPKKPIKR).

This sequence belongs to the universal ribosomal protein uS13 family. As to quaternary structure, part of the 30S ribosomal subunit. Forms a loose heterodimer with protein S19. Forms two bridges to the 50S subunit in the 70S ribosome.

Its function is as follows. Located at the top of the head of the 30S subunit, it contacts several helices of the 16S rRNA. In the 70S ribosome it contacts the 23S rRNA (bridge B1a) and protein L5 of the 50S subunit (bridge B1b), connecting the 2 subunits; these bridges are implicated in subunit movement. Contacts the tRNAs in the A and P-sites. This is Small ribosomal subunit protein uS13 from Hydrogenovibrio crunogenus (strain DSM 25203 / XCL-2) (Thiomicrospira crunogena).